The sequence spans 213 residues: Receptor-binding cancer antigen expressed on SiSo cells (213 aa).

At 1-6 the chain is on the extracellular side; that stretch reads MAITQF. Residues 7–27 form a helical; Signal-anchor for type III membrane protein membrane-spanning segment; the sequence is RLFKFCTCLATVFSFLKRLIC. At 28 to 213 the chain is on the cytoplasmic side; it reads RSGRGRKLSG…EQNKIGVKLS (186 aa). S36 is modified (phosphoserine). Phosphothreonine is present on T41. A Phosphotyrosine modification is found at Y94. A coiled-coil region spans residues 163–211; that stretch reads EDAAWQAEEVLRQQKLADREKRAAEQQRKKMEKEAQRLMKKEQNKIGVK. Basic and acidic residues predominate over residues 178 to 206; it reads LADREKRAAEQQRKKMEKEAQRLMKKEQN. The interval 178 to 213 is disordered; the sequence is LADREKRAAEQQRKKMEKEAQRLMKKEQNKIGVKLS.

As to quaternary structure, homodimer. As to expression, widely expressed. Expressed in ovary, testis, prostate, thymus, muscle and heart, but not in small intestine, colon, lymph nodes, or peripherical blood lymphocytes. The protein is not detected in any of the above organs.

The protein localises to the golgi apparatus membrane. Functionally, may participate in suppression of cell proliferation and induces apoptotic cell death through activation of interleukin-1-beta converting enzyme (ICE)-like proteases. In Homo sapiens (Human), this protein is Receptor-binding cancer antigen expressed on SiSo cells (EBAG9).